The following is a 271-amino-acid chain: uncharacterized protein (271 aa).

This is an uncharacterized protein from Acanthamoeba polyphaga mimivirus (APMV).